A 491-amino-acid chain; its full sequence is Putative mannan endo-1,4-beta-mannosidase 5 (491 aa).

The N-terminal stretch at 1-31 (METSYREEEARRKASLLHCIFFFLLGALAMA) is a signal peptide. Residues Trp-134 and Asn-248 each coordinate substrate. Glu-249 functions as the Proton donor in the catalytic mechanism. Tyr-330 contacts substrate. Glu-372 acts as the Nucleophile in catalysis. An N-linked (GlcNAc...) asparagine glycan is attached at Asn-385. A substrate-binding site is contributed by Trp-416. Asn-471 is a glycosylation site (N-linked (GlcNAc...) asparagine).

The protein belongs to the glycosyl hydrolase 5 (cellulase A) family. As to expression, expression not detected.

The protein localises to the secreted. It catalyses the reaction Random hydrolysis of (1-&gt;4)-beta-D-mannosidic linkages in mannans, galactomannans and glucomannans.. In Oryza sativa subsp. japonica (Rice), this protein is Putative mannan endo-1,4-beta-mannosidase 5 (MAN5).